The chain runs to 37 residues: Large ribosomal subunit protein bL36 (37 aa).

It belongs to the bacterial ribosomal protein bL36 family.

In Acidovorax ebreus (strain TPSY) (Diaphorobacter sp. (strain TPSY)), this protein is Large ribosomal subunit protein bL36.